A 338-amino-acid chain; its full sequence is Nuclear hormone receptor family member nhr-108 (338 aa).

Positions 7–82 form a DNA-binding region, nuclear receptor; the sequence is NQPCMVCGEI…IGMLEKVVAS (76 aa). An NR C4-type zinc finger spans residues 10–30; it reads CMVCGEISYSIRFGAVSCRAC. The segment at 46–65 adopts an NR C4-type; degenerate zinc-finger fold; the sequence is KRCNGACDLGKYHRKTCQSC. Residues 92–338 form the NR LBD domain; that stretch reads NNQTILSGLE…QCPLYEATNE (247 aa).

The protein belongs to the nuclear hormone receptor family.

It is found in the nucleus. In terms of biological role, orphan nuclear receptor. The polypeptide is Nuclear hormone receptor family member nhr-108 (nhr-108) (Caenorhabditis elegans).